The following is an 88-amino-acid chain: EMBRYO SURROUNDING FACTOR 1-like protein 11 (88 aa).

A signal peptide spans 1 to 23 (MISSSHFAIFCIILVSLFALQQY). 4 cysteine pairs are disulfide-bonded: Cys44-Cys59, Cys49-Cys78, Cys57-Cys74, and Cys60-Cys67.

It belongs to the MEG family. Expressed in stems.

In Arabidopsis thaliana (Mouse-ear cress), this protein is EMBRYO SURROUNDING FACTOR 1-like protein 11 (ESFL11).